A 227-amino-acid polypeptide reads, in one-letter code: LysM and putative peptidoglycan-binding domain-containing protein 1 (227 aa).

Positions 1 to 11 (MASPSRQPPPG) are enriched in pro residues. Residues 1-20 (MASPSRQPPPGGSGLLHGSR) form a disordered region. Phosphoserine occurs at positions 23 and 33. One can recognise a LysM domain in the interval 40 to 84 (LEHQLEPGDTLAGLALKYGVTMEQIKRANRLYTNDSIFLKKTLYI). Residues 95 to 150 (NGLDSEEEKDGEEEVRPSNDEVWPHSTERKKQETGAGRANGEVFPTPGQETPTPIH) are disordered. Acidic residues predominate over residues 98 to 107 (DSEEEKDGEE). Ser-99 is modified (phosphoserine). Over residues 108 to 127 (EVRPSNDEVWPHSTERKKQE) the composition is skewed to basic and acidic residues. Residues Ser-166, Ser-181, Ser-194, and Ser-212 each carry the phosphoserine modification. The interval 172 to 196 (AAQKLKKGESGVPGEDAGLHLSSPR) is disordered.

The chain is LysM and putative peptidoglycan-binding domain-containing protein 1 (LYSMD1) from Macaca fascicularis (Crab-eating macaque).